Consider the following 259-residue polypeptide: Small ribosomal subunit protein uS2 (259 aa).

Belongs to the universal ribosomal protein uS2 family.

The polypeptide is Small ribosomal subunit protein uS2 (Fervidobacterium nodosum (strain ATCC 35602 / DSM 5306 / Rt17-B1)).